The following is a 451-amino-acid chain: Interferon regulatory factor 4 (451 aa).

The segment at residues 21–129 (NGKLRQWLID…DPYKVYRIVP (109 aa)) is a DNA-binding region (IRF tryptophan pentad repeat). A phosphoserine; by ROCK2 mark is found at serine 447 and serine 448.

The protein belongs to the IRF family. In terms of assembly, interacts with the BATF-JUNB heterodimer. Interacts with BATF (via bZIP domain); the interaction is direct. Interacts with SPIB. Interacts with DEF6. Directly interacts with NLRP3 in the nucleus of Th2 cells; this interaction enhances IRF4 ability to bind to the IL4 promoter and is required for optimal IRF4-dependent IL4 transcription. Interacts with SPI1. Phosphorylation by ROCK2 regulates IL-17 and IL-21 production. In terms of tissue distribution, lymphoid cells.

Its subcellular location is the nucleus. It is found in the cytoplasm. Functionally, transcriptional activator. Binds to the interferon-stimulated response element (ISRE) of the MHC class I promoter. Binds the immunoglobulin lambda light chain enhancer, together with PU.1. Probably plays a role in ISRE-targeted signal transduction mechanisms specific to lymphoid cells. Involved in CD8(+) dendritic cell differentiation by forming a complex with the BATF-JUNB heterodimer in immune cells, leading to recognition of AICE sequence (5'-TGAnTCA/GAAA-3'), an immune-specific regulatory element, followed by cooperative binding of BATF and IRF4 and activation of genes. The polypeptide is Interferon regulatory factor 4 (Homo sapiens (Human)).